The following is a 311-amino-acid chain: 4-diphosphocytidyl-2-C-methyl-D-erythritol kinase (311 aa).

K13 is an active-site residue. Residue P114–A124 coordinates ATP. The active site involves D156.

The protein belongs to the GHMP kinase family. IspE subfamily.

It catalyses the reaction 4-CDP-2-C-methyl-D-erythritol + ATP = 4-CDP-2-C-methyl-D-erythritol 2-phosphate + ADP + H(+). It functions in the pathway isoprenoid biosynthesis; isopentenyl diphosphate biosynthesis via DXP pathway; isopentenyl diphosphate from 1-deoxy-D-xylulose 5-phosphate: step 3/6. In terms of biological role, catalyzes the phosphorylation of the position 2 hydroxy group of 4-diphosphocytidyl-2C-methyl-D-erythritol. This is 4-diphosphocytidyl-2-C-methyl-D-erythritol kinase from Corynebacterium diphtheriae (strain ATCC 700971 / NCTC 13129 / Biotype gravis).